Consider the following 79-residue polypeptide: MKSCKATKIEAVLTMDSKGQILLPKELRERAGLKAGDRLVAIAGCDENEEVCCLILVKAELVDEEMRSIIAPMLKGVVG.

The 51-residue stretch at 10–60 (EAVLTMDSKGQILLPKELRERAGLKAGDRLVAIAGCDENEEVCCLILVKAE) folds into the SpoVT-AbrB domain.

This is an uncharacterized protein from Archaeoglobus fulgidus (strain ATCC 49558 / DSM 4304 / JCM 9628 / NBRC 100126 / VC-16).